Consider the following 267-residue polypeptide: Alkaline ceramidase 3 (267 aa).

Residues 1 to 33 (MAPAADREGYWGPTTSTLDWCEENYSVTWYIAE) lie on the Cytoplasmic side of the membrane. Residues Asp-19, Trp-20, Glu-22, Asn-24, and Glu-33 each coordinate Ca(2+). The helical transmembrane segment at 34 to 55 (FWNTVSNLIMIIPPMFGAVQSV) threads the bilayer. At 56 to 61 (RDGLEK) the chain is on the lumenal side. A helical transmembrane segment spans residues 62–82 (RYIASYLALTVVGMGSWCFHM). Residue His-81 coordinates Zn(2+). Residues 83–87 (TLKYE) lie on the Cytoplasmic side of the membrane. The helical transmembrane segment at 88 to 108 (MQLLDELPMIYSCCIFVYCMF) threads the bilayer. Residues 109–118 (ECFKIKNSVN) lie on the Lumenal side of the membrane. A helical membrane pass occupies residues 119–139 (YHLLFTLVLFSLIVTTVYLKV). Topologically, residues 140-141 (KE) are cytoplasmic. Residues 142–162 (PIFHQVMYGMLVFTLVLRSIY) traverse the membrane as a helical segment. At 163-173 (IVTWVYPWLRG) the chain is on the lumenal side. Residues 174-194 (LGYTSLGIFLLGFLFWNIDNI) traverse the membrane as a helical segment. Over 195–215 (FCESLRNFRKKVPPIIGITTQ) the chain is Cytoplasmic. The helical transmembrane segment at 216–236 (FHAWWHILTGLGSYLHILFSL) threads the bilayer. 2 residues coordinate Zn(2+): His-217 and His-221. At 237–267 (YTRTLYLRYRPKVKFLFGIWPVILFEPLRKH) the chain is on the lumenal side.

Belongs to the alkaline ceramidase family. The cofactor is Zn(2+). As to expression, ubiquitously expressed. Highly expressed in placenta. Expressed in erythrocytes.

Its subcellular location is the endoplasmic reticulum membrane. The protein resides in the golgi apparatus membrane. The enzyme catalyses an N-acyl-(4R)-4-hydroxysphinganine + H2O = (4R)-hydroxysphinganine + a fatty acid. The catalysed reaction is N-(5Z,8Z,11Z,14Z-eicosatetraenoyl)-sphing-4-enine + H2O = sphing-4-enine + (5Z,8Z,11Z,14Z)-eicosatetraenoate. It carries out the reaction N-(5Z,8Z,11Z,14Z-eicosatetraenoyl)-sphinganine + H2O = sphinganine + (5Z,8Z,11Z,14Z)-eicosatetraenoate. It catalyses the reaction N-(5Z,8Z,11Z,14Z-eicosatetraenoyl)-(4R)-hydroxysphinganine + H2O = (4R)-hydroxysphinganine + (5Z,8Z,11Z,14Z)-eicosatetraenoate. The enzyme catalyses N-(11Z-eicosenoyl)-sphing-4-enine + H2O = (11Z)-eicosenoate + sphing-4-enine. The catalysed reaction is N-(11Z-eicosenoyl)-sphinganine + H2O = (11Z)-eicosenoate + sphinganine. It carries out the reaction N-(11Z-eicosenoyl)-(4R)-hydroxysphinganine + H2O = (11Z)-eicosenoate + (4R)-hydroxysphinganine. It catalyses the reaction N-(9Z-octadecenoyl)-sphing-4-enine + H2O = sphing-4-enine + (9Z)-octadecenoate. The enzyme catalyses N-(9Z-octadecenoyl)-sphinganine + H2O = sphinganine + (9Z)-octadecenoate. The catalysed reaction is N-(9Z-octadecenoyl)-(4R)-hydroxysphinganine + H2O = (4R)-hydroxysphinganine + (9Z)-octadecenoate. It carries out the reaction an N-acylsphing-4-enine + H2O = sphing-4-enine + a fatty acid. It catalyses the reaction an N-acylsphinganine + H2O = sphinganine + a fatty acid. Its pathway is lipid metabolism; sphingolipid metabolism. With respect to regulation, activated by 5 mM Ca(2+) and inhibited by 5 mM Zn(2+). In terms of biological role, endoplasmic reticulum and Golgi ceramidase that catalyzes the hydrolysis of unsaturated long-chain C18:1-, C20:1- and C20:4-ceramides, dihydroceramides and phytoceramides into sphingoid bases like sphingosine and free fatty acids at alkaline pH. Ceramides, sphingosine, and its phosphorylated form sphingosine-1-phosphate are bioactive lipids that mediate cellular signaling pathways regulating several biological processes including cell proliferation, apoptosis and differentiation. Controls the generation of sphingosine in erythrocytes, and thereby sphingosine-1-phosphate in plasma. Through the regulation of ceramides and sphingosine-1-phosphate homeostasis in the brain may play a role in neurons survival and function. By regulating the levels of pro-inflammatory ceramides in immune cells and tissues, may modulate the inflammatory response. This chain is Alkaline ceramidase 3 (ACER3), found in Homo sapiens (Human).